Reading from the N-terminus, the 1914-residue chain is Myosin light chain kinase, smooth muscle (1914 aa).

Gly2 bears the N-acetylalanine mark. 2 consecutive Ig-like C2-type domains span residues Pro33–Thr122 and Pro161–Ser249. Residues Cys182 and Cys233 are joined by a disulfide bond. A Phosphotyrosine; by ABL1 modification is found at Tyr231. The interval Asp286–Asp393 is disordered. Ser305 is subject to Phosphoserine. A compositionally biased stretch (basic and acidic residues) spans Arg318–Pro329. Over residues Thr331–Leu347 the composition is skewed to polar residues. Residues Ser343 and Ser365 each carry the phosphoserine modification. 2 Ig-like C2-type domains span residues Pro414 to Gln503 and Pro514 to Thr599. 2 disulfides stabilise this stretch: Cys435–Cys487 and Cys535–Cys583. Residue Tyr464 is modified to Phosphotyrosine; by ABL1 and SRC. Tyr471 bears the Phosphotyrosine; by SRC mark. Position 556 is a phosphotyrosine; by ABL1 (Tyr556). An N6-acetyllysine modification is found at Lys608. Tyr611 bears the Phosphotyrosine; by ABL1 mark. 2 consecutive Ig-like C2-type domains span residues Pro620–Thr711 and Pro721–Arg821. Cys742 and Cys805 are oxidised to a cystine. Phosphotyrosine; by ABL1 is present on residues Tyr792 and Tyr846. Tandem repeats lie at residues Asp868–Leu895, Asp896–Met923, Asp924–Val951, and Asp952–Pro979. The segment at Asp868–Ser998 is 5 X 28 AA approximate tandem repeats. The interval Met923 to Ser963 is actin-binding (calcium/calmodulin-sensitive). A disordered region spans residues Gln932–Pro1098. The residue at position 947 (Ser947) is a Phosphoserine. The interval Pro948 to Ser963 is calmodulin-binding. A 1-5; truncated repeat occupies Asp980–Ser998. Residues Ser999–Leu1003 form a 2-1; truncated repeat. Residues Ser999–Ser1063 form a 6 X 12 AA approximate tandem repeats region. 5 tandem repeats follow at residues Asn1004 to Ser1015, Asn1016 to Gly1027, Asn1028 to Gly1039, Asn1040 to Gly1051, and Asn1052 to Ser1063. Positions Lys1054–Cys1077 are enriched in basic and acidic residues. Positions Ser1061–Val1460 are actin-binding (calcium/calmodulin-insensitive). The region spanning Pro1098–Thr1186 is the Ig-like C2-type 7 domain. Cys1119 and Cys1170 are joined by a disulfide. A disordered region spans residues Ala1192–Pro1237. The Ig-like C2-type 8 domain occupies Pro1238–Thr1326. The 93-residue stretch at Pro1334–Glu1426 folds into the Fibronectin type-III domain. Over residues Ser1413 to Thr1422 the composition is skewed to polar residues. The disordered stretch occupies residues Ser1413–Glu1446. Over residues Pro1431–Pro1445 the composition is skewed to acidic residues. Ser1438 is modified (phosphoserine). Tyr1449 carries the post-translational modification Phosphotyrosine; by ABL1. A Protein kinase domain is found at Tyr1464–Leu1719. ATP-binding positions include Leu1470–Val1478 and Lys1493. The residue at position 1575 (Tyr1575) is a Phosphotyrosine; by ABL1. The Proton acceptor role is filled by Asp1585. Tyr1635 carries the post-translational modification Phosphotyrosine; by ABL1. A calmodulin-binding region spans residues Thr1711–Thr1774. Ser1759, Ser1760, Ser1772, Ser1773, and Ser1776 each carry phosphoserine. A disordered region spans residues Leu1767–Glu1787. Residues Arg1770–Leu1781 are compositionally biased toward polar residues. Thr1778 carries the post-translational modification Phosphothreonine. At Ser1779 the chain carries Phosphoserine. The 90-residue stretch at Pro1809–Ile1898 folds into the Ig-like C2-type 9 domain. An intrachain disulfide couples Cys1830 to Cys1882.

Belongs to the protein kinase superfamily. CAMK Ser/Thr protein kinase family. As to quaternary structure, all isoforms including Telokin bind calmodulin. Interacts with SVIL. Interacts with CTTN; this interaction is reduced during thrombin-induced endothelial cell (EC) contraction but is promoted by the barrier-protective agonist sphingosine 1-phosphate (S1P) within lamellipodia. A complex made of ABL1, CTTN and MYLK regulates cortical actin-based cytoskeletal rearrangement critical to sphingosine 1-phosphate (S1P)-mediated endothelial cell (EC) barrier enhancement. Binds to NAA10/ARD1 and PTK2B/PYK2. Mg(2+) serves as cofactor. The cofactor is Ca(2+). In terms of processing, can probably be down-regulated by phosphorylation. Tyrosine phosphorylation by ABL1 increases kinase activity, reverses MLCK-mediated inhibition of Arp2/3-mediated actin polymerization, and enhances CTTN-binding. Phosphorylation by SRC at Tyr-464 and Tyr-471 promotes CTTN binding. The C-terminus is deglutamylated by AGTPBP1/CCP1, AGBL1/CCP4 and AGBL4/CCP6, leading to the formation of Myosin light chain kinase, smooth muscle, deglutamylated form. The consequences of C-terminal deglutamylation are unknown. Post-translationally, acetylated at Lys-608 by NAA10/ARD1 via a calcium-dependent signaling; this acetylation represses kinase activity and reduces tumor cell migration. In terms of tissue distribution, smooth muscle and non-muscle isozymes are expressed in a wide variety of adult and fetal tissues and in cultured endothelium with qualitative expression appearing to be neither tissue- nor development-specific. Non-muscle isoform 2 is the dominant splice variant expressed in various tissues. Telokin has been found in a wide variety of adult and fetal tissues. Accumulates in well differentiated enterocytes of the intestinal epithelium in response to tumor necrosis factor (TNF).

The protein localises to the cytoplasm. Its subcellular location is the cell projection. It is found in the lamellipodium. The protein resides in the cleavage furrow. It localises to the cytoskeleton. The protein localises to the stress fiber. It catalyses the reaction L-seryl-[myosin light chain] + ATP = O-phospho-L-seryl-[myosin light chain] + ADP + H(+). The enzyme catalyses L-threonyl-[myosin light chain] + ATP = O-phospho-L-threonyl-[myosin light chain] + ADP + H(+). Its activity is regulated as follows. Isoform 1 is activated by phosphorylation on Tyr-464 and Tyr-471. Isoforms which lack these tyrosine residues are not regulated in this way. All catalytically active isoforms require binding to calcium and calmodulin for activation. Repressed by organometallic pyridylnaphthalimide complexes, wortmannin, ML-7 (a synthetic naphthalenesulphonyl derivative that inhibits the binding of ATP to MLCK) and ML-9. Calcium/calmodulin-dependent myosin light chain kinase implicated in smooth muscle contraction via phosphorylation of myosin light chains (MLC). Also regulates actin-myosin interaction through a non-kinase activity. Phosphorylates PTK2B/PYK2 and myosin light-chains. Involved in the inflammatory response (e.g. apoptosis, vascular permeability, leukocyte diapedesis), cell motility and morphology, airway hyperreactivity and other activities relevant to asthma. Required for tonic airway smooth muscle contraction that is necessary for physiological and asthmatic airway resistance. Necessary for gastrointestinal motility. Implicated in the regulation of endothelial as well as vascular permeability, probably via the regulation of cytoskeletal rearrangements. In the nervous system it has been shown to control the growth initiation of astrocytic processes in culture and to participate in transmitter release at synapses formed between cultured sympathetic ganglion cells. Critical participant in signaling sequences that result in fibroblast apoptosis. Plays a role in the regulation of epithelial cell survival. Required for epithelial wound healing, especially during actomyosin ring contraction during purse-string wound closure. Mediates RhoA-dependent membrane blebbing. Triggers TRPC5 channel activity in a calcium-dependent signaling, by inducing its subcellular localization at the plasma membrane. Promotes cell migration (including tumor cells) and tumor metastasis. PTK2B/PYK2 activation by phosphorylation mediates ITGB2 activation and is thus essential to trigger neutrophil transmigration during acute lung injury (ALI). May regulate optic nerve head astrocyte migration. Probably involved in mitotic cytoskeletal regulation. Regulates tight junction probably by modulating ZO-1 exchange in the perijunctional actomyosin ring. Mediates burn-induced microvascular barrier injury; triggers endothelial contraction in the development of microvascular hyperpermeability by phosphorylating MLC. Essential for intestinal barrier dysfunction. Mediates Giardia spp.-mediated reduced epithelial barrier function during giardiasis intestinal infection via reorganization of cytoskeletal F-actin and tight junctional ZO-1. Necessary for hypotonicity-induced Ca(2+) entry and subsequent activation of volume-sensitive organic osmolyte/anion channels (VSOAC) in cervical cancer cells. Responsible for high proliferative ability of breast cancer cells through anti-apoptosis. The sequence is that of Myosin light chain kinase, smooth muscle from Homo sapiens (Human).